Consider the following 294-residue polypeptide: ATP synthase gamma chain (294 aa).

The protein belongs to the ATPase gamma chain family. In terms of assembly, F-type ATPases have 2 components, CF(1) - the catalytic core - and CF(0) - the membrane proton channel. CF(1) has five subunits: alpha(3), beta(3), gamma(1), delta(1), epsilon(1). CF(0) has three main subunits: a, b and c.

It localises to the cell inner membrane. Its function is as follows. Produces ATP from ADP in the presence of a proton gradient across the membrane. The gamma chain is believed to be important in regulating ATPase activity and the flow of protons through the CF(0) complex. In Rhizobium etli (strain CIAT 652), this protein is ATP synthase gamma chain.